The chain runs to 2885 residues: Chromodomain-helicase-DNA-binding protein 9 (2885 aa).

The segment at 173–195 (QCSSLHSQQSRSNLNPGQNSLGQ) is disordered. Residue K197 forms a Glycyl lysine isopeptide (Lys-Gly) (interchain with G-Cter in SUMO2) linkage. Disordered regions lie at residues 242-263 (CSSHQEGNYNRPSPSMTSCSVS), 283-347 (SLLQ…QGNY), and 479-677 (CLQR…QPLQ). Composition is skewed to polar residues over residues 243–263 (SSHQEGNYNRPSPSMTSCSVS) and 283–310 (SLLQSSAGLAPGHTNQALSDFAGSNSFS). Residues 323–334 (LLNPTPSLNSNN) show a composition bias toward low complexity. Composition is skewed to polar residues over residues 335-347 (FQILHSSHPQGNY) and 483-505 (QPPSSKKSDGSGTYTKLQNTQVR). K498 is subject to N6-acetyllysine. Composition is skewed to basic and acidic residues over residues 507-526 (MSEKKPRKRVESESKQEKAN) and 534-544 (ARAKERGERNI). Phosphoserine is present on S549. The segment covering 572-592 (KPKDRDNKKPKTYSKLKEKTK) has biased composition (basic and acidic residues). K595 participates in a covalent cross-link: Glycyl lysine isopeptide (Lys-Gly) (interchain with G-Cter in SUMO2). Residue S610 is modified to Phosphoserine. A compositionally biased stretch (basic and acidic residues) spans 617–630 (AEQRSQHTFKEQHS). Positions 631–643 (QKRRSNRQIKRKK) are enriched in basic residues. Residues 644–659 (YAEDAEGKQSEEEVKG) show a composition bias toward basic and acidic residues. Chromo domains follow at residues 689–760 (AIVD…HFLA) and 772–838 (VEVD…HLDR). An LXXLL motif 1 motif is present at residues 867-871 (LNWLL). Positions 871–1045 (LFNWYNRRNC…FSLLHFLEPL (175 aa)) constitute a Helicase ATP-binding domain. 884–891 (DEMGLGKT) is an ATP binding site. The DEAH box signature appears at 996–999 (DEAH). The short motif at 1035-1039 (LFSLL) is the LXXLL motif 2 element. Residues 1185–1336 (LIDKLLPKMK…KAVLQSMSGR (152 aa)) enclose the Helicase C-terminal domain. Residues 1460–1484 (KDELAELSEAESEGEEKPKLRRPCD) are disordered. Residues 1464–1473 (AELSEAESEG) show a composition bias toward acidic residues. 2 positions are modified to phosphoserine: S1467 and S1471. A compositionally biased stretch (basic and acidic residues) spans 1474–1484 (EEKPKLRRPCD). Residues K1587, K1737, and K1902 each participate in a glycyl lysine isopeptide (Lys-Gly) (interchain with G-Cter in SUMO2) cross-link. S2025 is subject to Phosphoserine. Positions 2030 to 2034 (LPRLL) match the LXXLL motif 3 motif. Residue K2037 forms a Glycyl lysine isopeptide (Lys-Gly) (interchain with G-Cter in SUMO2) linkage. The disordered stretch occupies residues 2046-2238 (VKSESLTEEP…TQDSFQANNG (193 aa)). S2057 and S2058 each carry phosphoserine. A Glycyl lysine isopeptide (Lys-Gly) (interchain with G-Cter in SUMO2) cross-link involves residue K2073. 2 positions are modified to phosphoserine: S2074 and S2078. Residues 2083–2092 (VLSQATGDQK) show a composition bias toward polar residues. Positions 2093–2103 (SGGKSETDRRM) are enriched in basic and acidic residues. Low complexity predominate over residues 2127 to 2193 (SQSSSDSDSD…SSSSSSSSSS (67 aa)). Basic and acidic residues predominate over residues 2201 to 2215 (DVQKREGTPHRKAYD). Polar residues predominate over residues 2220–2238 (ASLSTTQDETQDSFQANNG). The binds A/T-rich DNA stretch occupies residues 2331-2471 (QMSKVKKHVR…LSYPQPQRIP (141 aa)). Residues K2349, K2355, and K2360 each participate in a glycyl lysine isopeptide (Lys-Gly) (interchain with G-Cter in SUMO2) cross-link. Residues 2428–2435 (KKRRGRRR) form an a.T hook-like region. Residues 2473-2494 (TESPVPVINLKDGTRLAGDDAP) are disordered. Positions 2484–2494 (DGTRLAGDDAP) are enriched in basic and acidic residues. The LXXLL motif 4 motif lies at 2710-2714 (LPNLL). The tract at residues 2724–2770 (AESGAEEKRGNDSKELEGKKERTESQSPENGGERCVPGSPSTSSTAA) is disordered. The span at 2728–2747 (AEEKRGNDSKELEGKKERTE) shows a compositional bias: basic and acidic residues. Residues 2782 to 2786 (LNPLL) carry the LXXLL motif 5 motif. Over residues 2818-2847 (KNKSDDLDSSKSVEIKEENSRVRDQEEKGG) the composition is skewed to basic and acidic residues. The segment at 2818-2885 (KNKSDDLDSS…SEDSDSSNED (68 aa)) is disordered. Residue K2833 forms a Glycyl lysine isopeptide (Lys-Gly) (interchain with G-Cter in SUMO2) linkage. Low complexity predominate over residues 2864-2876 (RASSGSDSSSSSS).

It belongs to the SNF2/RAD54 helicase family. As to quaternary structure, interacts with PPARA. Probably interacts with ESR1 and NR1I3. Phosphorylated on serine and tyrosine residues. In terms of tissue distribution, expressed in osteoprogenitor cells during development and in mature bone (at protein level).

It localises to the cytoplasm. The protein localises to the nucleus. The catalysed reaction is ATP + H2O = ADP + phosphate + H(+). Probable ATP-dependent chromatin-remodeling factor. Acts as a transcriptional coactivator for PPARA and possibly other nuclear receptors. Has DNA-dependent ATPase activity and binds to A/T-rich DNA. Associates with A/T-rich regulatory regions in promoters of genes that participate in the differentiation of progenitors during osteogenesis. The sequence is that of Chromodomain-helicase-DNA-binding protein 9 (Chd9) from Mus musculus (Mouse).